The chain runs to 50 residues: Inducible serine protease inhibitor 1 (50 aa).

Positions 1 to 27 (DLVXGTNFXKNNPXSTRVAANSXRSPS) are disordered. Residues 8–25 (FXKNNPXSTRVAANSXRS) are compositionally biased toward polar residues.

Functionally, inhibits trypsin and the toxin protease PR2 of M.anisopliae. Does not inhibit chymotrypsin, subtilisin Carlsberg, proteinase K, porcine pancreatic elastase and the toxin protease PR1 of M.anisopliae. This is Inducible serine protease inhibitor 1 from Galleria mellonella (Greater wax moth).